Consider the following 157-residue polypeptide: Urease accessory protein UreE (157 aa).

The protein belongs to the UreE family.

Its subcellular location is the cytoplasm. Involved in urease metallocenter assembly. Binds nickel. Probably functions as a nickel donor during metallocenter assembly. The polypeptide is Urease accessory protein UreE (Paenarthrobacter aurescens (strain TC1)).